The following is a 148-amino-acid chain: UPF0756 membrane protein YeaL (148 aa).

A run of 4 helical transmembrane segments spans residues alanine 14–valine 34, leucine 51–leucine 71, phenylalanine 80–glycine 100, and valine 121–valine 141.

This sequence belongs to the UPF0756 family.

Its subcellular location is the cell membrane. The polypeptide is UPF0756 membrane protein YeaL (Escherichia fergusonii (strain ATCC 35469 / DSM 13698 / CCUG 18766 / IAM 14443 / JCM 21226 / LMG 7866 / NBRC 102419 / NCTC 12128 / CDC 0568-73)).